Consider the following 105-residue polypeptide: Flagellar transcriptional regulator FlhD (105 aa).

It belongs to the FlhD family. Homodimer; disulfide-linked. Forms a heterohexamer composed of two FlhC and four FlhD subunits. Each FlhC binds a FlhD dimer, forming a heterotrimer, and a hexamer assembles by dimerization of two heterotrimers.

It is found in the cytoplasm. Its function is as follows. Functions in complex with FlhC as a master transcriptional regulator that regulates transcription of several flagellar and non-flagellar operons by binding to their promoter region. Activates expression of class 2 flagellar genes, including fliA, which is a flagellum-specific sigma factor that turns on the class 3 genes. Also regulates genes whose products function in a variety of physiological pathways. The protein is Flagellar transcriptional regulator FlhD of Cupriavidus necator (strain ATCC 17699 / DSM 428 / KCTC 22496 / NCIMB 10442 / H16 / Stanier 337) (Ralstonia eutropha).